Here is a 316-residue protein sequence, read N- to C-terminus: Ribosomal RNA small subunit methyltransferase H (316 aa).

Residues 35–37, Asp55, Phe84, Asp105, and Gln112 each bind S-adenosyl-L-methionine; that span reads AGH.

It belongs to the methyltransferase superfamily. RsmH family.

It is found in the cytoplasm. It carries out the reaction cytidine(1402) in 16S rRNA + S-adenosyl-L-methionine = N(4)-methylcytidine(1402) in 16S rRNA + S-adenosyl-L-homocysteine + H(+). Specifically methylates the N4 position of cytidine in position 1402 (C1402) of 16S rRNA. The polypeptide is Ribosomal RNA small subunit methyltransferase H (Streptococcus thermophilus (strain CNRZ 1066)).